A 262-amino-acid chain; its full sequence is uncharacterized protein (262 aa).

The Radical SAM core domain maps to 1-211 (MAFHVMIIPS…LLYLLDSYLE (211 aa)). Cys13, Cys17, and Cys20 together coordinate [4Fe-4S] cluster.

Belongs to the radical SAM superfamily. Anaerobic sulfatase-maturating enzyme family. [4Fe-4S] cluster is required as a cofactor.

This is an uncharacterized protein from Methanothermobacter thermautotrophicus (strain ATCC 29096 / DSM 1053 / JCM 10044 / NBRC 100330 / Delta H) (Methanobacterium thermoautotrophicum).